Reading from the N-terminus, the 632-residue chain is 2-oxoacid:ferredoxin oxidoreductase subunit alpha (632 aa).

The short motif at 253–257 is the YPITP motif element; that stretch reads YPITP. 2 residues coordinate substrate: T256 and R344.

As to quaternary structure, heterodimer composed of an alpha and a beta subunit.

The protein resides in the cytoplasm. The catalysed reaction is a 2-oxocarboxylate + 2 oxidized [2Fe-2S]-[ferredoxin] + CoA = an acyl-CoA + 2 reduced [2Fe-2S]-[ferredoxin] + CO2 + H(+). Functionally, catalyzes the coenzyme A-dependent oxidative decarboxylation of different 2-oxoacids such as 2-oxoglutarate, pyruvate and 2-oxobutyrate to form their CoA derivatives. This chain is 2-oxoacid:ferredoxin oxidoreductase subunit alpha, found in Sulfolobus sp.